The primary structure comprises 309 residues: Probable (S)-ureidoglycine aminohydrolase (309 aa).

Residues 1-22 form the signal peptide; that stretch reads MMLPRLLLLVVASALPLASVAA. Residues glutamate 245, histidine 247, histidine 251, and glutamine 285 each coordinate Mn(2+). Glutamate 245 provides a ligand contact to substrate. Residues glutamine 285, tyrosine 297, and lysine 301 each coordinate substrate.

It belongs to the UGHY family. As to quaternary structure, homooctamer. It depends on Mn(2+) as a cofactor.

It localises to the endoplasmic reticulum. It catalyses the reaction (S)-2-ureidoglycine + H2O = (S)-ureidoglycolate + NH4(+). Its function is as follows. Involved in the catabolism of purine nucleotides. The sequential activity of AAH, UGLYAH and UAH allows a complete purine breakdown without the intermediate generation of urea. This Oryza sativa subsp. japonica (Rice) protein is Probable (S)-ureidoglycine aminohydrolase (UGLYAH).